Reading from the N-terminus, the 160-residue chain is H/ACA ribonucleoprotein complex subunit 2-like protein (160 aa).

This sequence belongs to the eukaryotic ribosomal protein eL8 family. In terms of assembly, component of the small nucleolar ribonucleoprotein particle containing H/ACA-type snoRNAs (H/ACA snoRNPs).

The protein localises to the nucleus. It is found in the nucleolus. Required for ribosome biogenesis. Part of a complex which catalyzes pseudouridylation of rRNA. This involves the isomerization of uridine such that the ribose is subsequently attached to C5, instead of the normal N1. Pseudouridine ('psi') residues may serve to stabilize the conformation of rRNAs. This Drosophila yakuba (Fruit fly) protein is H/ACA ribonucleoprotein complex subunit 2-like protein (NHP2).